A 264-amino-acid polypeptide reads, in one-letter code: Thymidylate synthase (264 aa).

Residue arginine 21 coordinates dUMP. Histidine 51 contacts (6R)-5,10-methylene-5,6,7,8-tetrahydrofolate. 126–127 (RR) serves as a coordination point for dUMP. The Nucleophile role is filled by cysteine 146. Residues 166 to 169 (RSCD), asparagine 177, and 207 to 209 (HLY) each bind dUMP. (6R)-5,10-methylene-5,6,7,8-tetrahydrofolate is bound at residue aspartate 169. (6R)-5,10-methylene-5,6,7,8-tetrahydrofolate is bound at residue alanine 263.

The protein belongs to the thymidylate synthase family. Bacterial-type ThyA subfamily. Homodimer.

Its subcellular location is the cytoplasm. The enzyme catalyses dUMP + (6R)-5,10-methylene-5,6,7,8-tetrahydrofolate = 7,8-dihydrofolate + dTMP. It functions in the pathway pyrimidine metabolism; dTTP biosynthesis. Its function is as follows. Catalyzes the reductive methylation of 2'-deoxyuridine-5'-monophosphate (dUMP) to 2'-deoxythymidine-5'-monophosphate (dTMP) while utilizing 5,10-methylenetetrahydrofolate (mTHF) as the methyl donor and reductant in the reaction, yielding dihydrofolate (DHF) as a by-product. This enzymatic reaction provides an intracellular de novo source of dTMP, an essential precursor for DNA biosynthesis. This is Thymidylate synthase from Hamiltonella defensa subsp. Acyrthosiphon pisum (strain 5AT).